The chain runs to 664 residues: Methionine--tRNA ligase (664 aa).

Residues 13–23 carry the 'HIGH' region motif; it reads PYTNGPCHLGH. Zn(2+) contacts are provided by Cys144, Cys147, Cys156, and Cys160. Residues 327 to 331 carry the 'KMSKS' region motif; the sequence is KFSKS. Lys330 contributes to the ATP binding site. One can recognise a tRNA-binding domain in the interval 566–664; sequence EFAKVEMKTG…TPVPSGTKIR (99 aa).

The protein belongs to the class-I aminoacyl-tRNA synthetase family. MetG type 1 subfamily. Homodimer. Zn(2+) is required as a cofactor.

It localises to the cytoplasm. The enzyme catalyses tRNA(Met) + L-methionine + ATP = L-methionyl-tRNA(Met) + AMP + diphosphate. In terms of biological role, is required not only for elongation of protein synthesis but also for the initiation of all mRNA translation through initiator tRNA(fMet) aminoacylation. The sequence is that of Methionine--tRNA ligase from Methanospirillum hungatei JF-1 (strain ATCC 27890 / DSM 864 / NBRC 100397 / JF-1).